Reading from the N-terminus, the 162-residue chain is ATP-dependent Clp protease adapter protein CLPS1, chloroplastic (162 aa).

The transit peptide at 1 to 58 (MAASCLRPAPTASAQMMTRSPVAGLPRPCSALQRSGCTLQGAFGTFAPQTTRTFVVTW) directs the protein to the chloroplast.

Belongs to the ClpS family.

The protein localises to the plastid. The protein resides in the chloroplast stroma. Functionally, small adapter protein that modulate the activity of plastid Clp protease system (CLPC). Probably involved in substrate selection for plastid CLPC. This Chlamydomonas reinhardtii (Chlamydomonas smithii) protein is ATP-dependent Clp protease adapter protein CLPS1, chloroplastic.